A 409-amino-acid polypeptide reads, in one-letter code: MARAKFERTKPHVNIGTIGHVDHGKTTLTAAITMTLAALGQAVAKGYDQIDNAPEEKARGITINTAHVEYETANRHYAHVDCPGHADYVKNMITGAAQMDGAILVVAATDGPMPQTREHILLAKQVGVPKLVVFLNKEDMMEDAELLELVELELRELLTEYEFDGDDIPIVRGSGLQALEVMTKNPKTQRGENPWVDKIYELMDAVDSYIPDPERDIDKPFLMAVEDVFSITGRGTVATGRIERGKVKVGDVVELVGIRDTRNTTVTGIEMFKKSLDEGMAGDNAGVLLRGIQKADIERGMVLAKPGSITPHTQFEGEVYVLTEKEGGRKTPFFAGYRPQFYVRTTDVTGTIKAFTSDEGETVEMVMPGDRIKVTVELINPIAIEQGMRFAIREGGRTIGAGVVSKIVK.

In terms of domain architecture, tr-type G spans lysine 10 to glutamate 214. A G1 region spans residues glycine 19 to threonine 26. Glycine 19–threonine 26 is a binding site for GTP. Position 26 (threonine 26) interacts with Mg(2+). A G2 region spans residues glycine 60–asparagine 64. Positions aspartate 81–glycine 84 are G3. GTP-binding positions include aspartate 81 to histidine 85 and asparagine 136 to aspartate 139. The tract at residues asparagine 136–aspartate 139 is G4. Positions serine 174–leucine 176 are G5.

In terms of assembly, monomer.

The protein localises to the cytoplasm. It catalyses the reaction GTP + H2O = GDP + phosphate + H(+). GTP hydrolase that promotes the GTP-dependent binding of aminoacyl-tRNA to the A-site of ribosomes during protein biosynthesis. This chain is Elongation factor Tu, found in Nostoc sp. (strain PCC 7120 / SAG 25.82 / UTEX 2576).